Here is a 197-residue protein sequence, read N- to C-terminus: MSSKEQKTPEGQAPEEIIMDQHEEIEAVEPEASAEQVDPRDEKIANLEAQLAEAQTRERDGILRVKAEMENLRRRTELDIEKAHKFALEKFINELLPVIDSLDRALEVADKANPDMSAMVEGIELTLKSMLDVVRKFGVEVIAETNVPLDPNVHQAIAMVESDDVAPGNVLGIMQKGYTLNGRTIRAAMVTVAKAKD.

The segment at 1-39 is disordered; sequence MSSKEQKTPEGQAPEEIIMDQHEEIEAVEPEASAEQVDP.

Belongs to the GrpE family. In terms of assembly, homodimer.

Its subcellular location is the cytoplasm. Participates actively in the response to hyperosmotic and heat shock by preventing the aggregation of stress-denatured proteins, in association with DnaK and GrpE. It is the nucleotide exchange factor for DnaK and may function as a thermosensor. Unfolded proteins bind initially to DnaJ; upon interaction with the DnaJ-bound protein, DnaK hydrolyzes its bound ATP, resulting in the formation of a stable complex. GrpE releases ADP from DnaK; ATP binding to DnaK triggers the release of the substrate protein, thus completing the reaction cycle. Several rounds of ATP-dependent interactions between DnaJ, DnaK and GrpE are required for fully efficient folding. In Escherichia coli O45:K1 (strain S88 / ExPEC), this protein is Protein GrpE.